We begin with the raw amino-acid sequence, 205 residues long: Adenylyl-sulfate kinase (205 aa).

39–46 (GLSGAGKS) provides a ligand contact to ATP. Ser113 functions as the Phosphoserine intermediate in the catalytic mechanism.

The protein belongs to the APS kinase family.

It carries out the reaction adenosine 5'-phosphosulfate + ATP = 3'-phosphoadenylyl sulfate + ADP + H(+). The protein operates within sulfur metabolism; hydrogen sulfide biosynthesis; sulfite from sulfate: step 2/3. Its function is as follows. Catalyzes the synthesis of activated sulfate. This chain is Adenylyl-sulfate kinase, found in Vibrio parahaemolyticus serotype O3:K6 (strain RIMD 2210633).